A 214-amino-acid chain; its full sequence is A-type ATP synthase subunit D (214 aa).

This sequence belongs to the V-ATPase D subunit family. In terms of assembly, has multiple subunits with at least A(3), B(3), C, D, E, F, H, I and proteolipid K(x).

It is found in the cell membrane. In terms of biological role, component of the A-type ATP synthase that produces ATP from ADP in the presence of a proton gradient across the membrane. The protein is A-type ATP synthase subunit D of Pyrococcus furiosus (strain ATCC 43587 / DSM 3638 / JCM 8422 / Vc1).